A 262-amino-acid polypeptide reads, in one-letter code: Acyl-[acyl-carrier-protein]--UDP-N-acetylglucosamine O-acyltransferase (262 aa).

The protein belongs to the transferase hexapeptide repeat family. LpxA subfamily. Homotrimer.

It localises to the cytoplasm. The enzyme catalyses a (3R)-hydroxyacyl-[ACP] + UDP-N-acetyl-alpha-D-glucosamine = a UDP-3-O-[(3R)-3-hydroxyacyl]-N-acetyl-alpha-D-glucosamine + holo-[ACP]. It functions in the pathway glycolipid biosynthesis; lipid IV(A) biosynthesis; lipid IV(A) from (3R)-3-hydroxytetradecanoyl-[acyl-carrier-protein] and UDP-N-acetyl-alpha-D-glucosamine: step 1/6. Its function is as follows. Involved in the biosynthesis of lipid A, a phosphorylated glycolipid that anchors the lipopolysaccharide to the outer membrane of the cell. This chain is Acyl-[acyl-carrier-protein]--UDP-N-acetylglucosamine O-acyltransferase, found in Histophilus somni (strain 2336) (Haemophilus somnus).